Consider the following 552-residue polypeptide: uncharacterized protein (552 aa).

Belongs to the transposase 25 family.

This is an uncharacterized protein from Sinorhizobium fredii (strain NBRC 101917 / NGR234).